The sequence spans 706 residues: Sodium- and chloride-dependent glycine transporter 1 (706 aa).

Residues 1 to 26 (MSGGDTRAAIARPRMAAAHGPVAPSS) form a disordered region. The Cytoplasmic portion of the chain corresponds to 1–108 (MSGGDTRAAI…KRGNWGNQIE (108 aa)). Residues 7 to 18 (RAAIARPRMAAA) are compositionally biased toward low complexity. The next 3 helical transmembrane spans lie at 109-129 (FVLTSVGYAVGLGNVWRFPYL), 136-156 (GAFMFPYFIMLIFCGIPLFFM), and 188-208 (VSTYIGIYYNVVICIAFYYFF). Residues 209 to 285 (SSMTHVLPWA…LSDDIGNFGE (77 aa)) are Extracellular-facing. Helical transmembrane passes span 286 to 306 (VRLPLLGCLGVSWLVVFLCLI), 315 to 335 (VVYFTATFPYVVLTILFVRGV), 360 to 380 (VWGDAASQIFYSLGCAWGGLI), 407 to 427 (SVYAGFVIFSILGFMANHLGV), 450 to 470 (LLPISPLWSLLFFFMLILLGL), 506 to 526 (VAGFLLGIPLTSQAGIYWLLL), 530 to 550 (YAASFSLVVISCIMCVAIMYI), 570 to 590 (LFFQICWRFVSPAIIFFILVF), and 610 to 630 (VAIGFLMALSSVLCIPLYAMF). The Cytoplasmic segment spans residues 631–706 (RLCRTDGDTL…GSSRLQDSRI (76 aa)). Serine 673 and serine 698 each carry phosphoserine. The interval 695 to 706 (SNGSSRLQDSRI) is essential for interaction with EXOC1.

The protein belongs to the sodium:neurotransmitter symporter (SNF) (TC 2.A.22) family. SLC6A9 subfamily. In terms of assembly, interacts with EXOC1; interaction increases the transporter capacity of SLC6A9 probably by promoting its insertion into the cell membrane. Interacts with EXOC3 and EXOC4. As to expression, expressed in the brain, kidney, pancreas, lung, placenta and liver. In terms of tissue distribution, expressed only in the brain.

It is found in the cell membrane. The catalysed reaction is glycine(out) + chloride(out) + 2 Na(+)(out) = glycine(in) + chloride(in) + 2 Na(+)(in). Inhibited by sarcosine. Sodium- and chloride-dependent glycine transporter. Essential for regulating glycine concentrations at inhibitory glycinergic synapses. Its function is as follows. Sodium- and chloride-dependent glycine transporter. The polypeptide is Sodium- and chloride-dependent glycine transporter 1 (SLC6A9) (Homo sapiens (Human)).